The sequence spans 547 residues: Phospholipase DDHD1 (547 aa).

Residue Ser184 is part of the active site. The DDHD domain maps to 258-533 (LKFKVENFFC…ALFLLTFMYK (276 aa)). A Phosphoserine modification is found at Ser370. The interval 414–448 (RSSASQPSEPSKDSLEDDKKPSASPSTTTVATQTL) is disordered. Residues 423–434 (PSKDSLEDDKKP) show a composition bias toward basic and acidic residues. Low complexity predominate over residues 435–448 (SASPSTTTVATQTL).

It belongs to the PA-PLA1 family. As to quaternary structure, forms homooligomers and, to a much smaller extent, heterooligomers with DDHD2. Interacts with SEC23A and SEC24C. Predominantly expressed in testis, in round and elongating spermatids, but not in spermatocytes (at protein level). Also expressed in the brain, and at lower levels in other tissues such as thymus and lung (at protein level).

The protein localises to the cytoplasm. It catalyses the reaction a 1,2-diacyl-sn-glycero-3-phosphate + H2O = a 2-acyl-sn-glycerol 3-phosphate + a fatty acid + H(+). It carries out the reaction a 1,2-diacyl-sn-glycero-3-phospho-(1D-myo-inositol) + H2O = a 2-acyl-sn-glycero-3-phospho-D-myo-inositol + a fatty acid + H(+). The enzyme catalyses 1-octadecanoyl-2-(5Z,8Z,11Z,14Z-eicosatetraenoyl)-sn-glycero-3-phospho-(1D-myo-inositol) + H2O = 2-(5Z,8Z,11Z,14Z-eicosatetraenoyl)-sn-glycero-3-phospho-(1D-myo-inositol) + octadecanoate + H(+). The catalysed reaction is a 1-acyl-2-(5Z,8Z,11Z,14Z-eicosatetraenoyl)-sn-glycero-3-phospho-(1D-myo-inositol) + H2O = 2-(5Z,8Z,11Z,14Z-eicosatetraenoyl)-sn-glycero-3-phospho-(1D-myo-inositol) + a fatty acid + H(+). It catalyses the reaction 1,2-dihexadecanoyl-sn-glycero-3-phospho-(1D-myo-inositol) + H2O = 2-hexadecanoyl-sn-glycero-3-phospho-(1D-myo-inositol) + hexadecanoate + H(+). It carries out the reaction a 1-acyl-2-(5Z,8Z,11Z,14Z)-eicosatetraenoyl-sn-glycero-3-phosphate + H2O = 2-(5Z,8Z,11Z,14Z-eicosatetraenoyl)-sn-glycero-3-phosphate + a fatty acid + H(+). The enzyme catalyses 1-(9Z-octadecenoyl)-2-(7Z,10Z,13Z,16Z,19Z-docosapentaenoyl)-sn-glycero-3-phospho-1D-myo-inositol + H2O = 2-(7Z,10Z,13Z,16Z,19Z-docosapentaenoyl)-sn-glycero-3-phospho-1D-myo-inositol + (9Z)-octadecenoate + H(+). The catalysed reaction is 1-(9Z-octadecenoyl)-2-(5Z,8Z,11Z,14Z-eicosatetraenoyl)-sn-glycero-3-phospho-1D-myo-inositol + H2O = 2-(5Z,8Z,11Z,14Z-eicosatetraenoyl)-sn-glycero-3-phospho-(1D-myo-inositol) + (9Z)-octadecenoate + H(+). It catalyses the reaction 1,2-di-(9Z-octadecenoyl)-sn-glycero-3-phospho-1D-myo-inositol + H2O = 2-(9Z-octadecenoyl)-sn-glycero-3-phospho-1D-myo-inositol + (9Z)-octadecenoate + H(+). It carries out the reaction 1-(9Z-octadecenoyl)-2-(8Z,11Z,14Z-eicosatrienoyl)-sn-glycero-3-phospho-1D-myo-inositol + H2O = 2-(8Z,11Z,14Z-eicosatrienoyl)-sn-glycero-3-phospho-1D-myo-inositol + (9Z)-octadecenoate + H(+). The enzyme catalyses 1,2-di-(9Z-octadecenoyl)-sn-glycero-3-phosphate + H2O = 2-(9Z-octadecenoyl)-sn-glycero-3-phosphate + (9Z)-octadecenoate + H(+). The catalysed reaction is 1-hexadecanoyl-2-(9Z-octadecenoyl)-sn-glycero-3-phosphate + H2O = 2-(9Z-octadecenoyl)-sn-glycero-3-phosphate + hexadecanoate + H(+). It catalyses the reaction 1-hexadecanoyl-2-(9Z-octadecenoyl)-sn-glycero-3-phospho-L-serine + H2O = 2-(9Z-octadecenoyl)-sn-glycero-3-phospho-L-serine + hexadecanoate + H(+). It carries out the reaction 1,2-di-(5Z,8Z,11Z,14Z)-eicosatetraenoyl-sn-glycero-3-phosphate + H2O = 2-(5Z,8Z,11Z,14Z-eicosatetraenoyl)-sn-glycero-3-phosphate + (5Z,8Z,11Z,14Z)-eicosatetraenoate + H(+). The enzyme catalyses 1-octadecanoyl-2-(5Z,8Z,11Z,14Z-eicosatetraenoyl)-sn-glycero-3-phosphate + H2O = 2-(5Z,8Z,11Z,14Z-eicosatetraenoyl)-sn-glycero-3-phosphate + octadecanoate + H(+). The catalysed reaction is a 1,2-diacyl-sn-glycero-3-phospho-L-serine + H2O = a 2-acyl-sn-glycero-3-phospho-L-serine + a fatty acid + H(+). It catalyses the reaction a 1,2-diacyl-sn-glycero-3-phosphocholine + H2O = a 2-acyl-sn-glycero-3-phosphocholine + a fatty acid + H(+). It carries out the reaction 1,2-di-(9Z-octadecenoyl)-sn-glycero-3-phosphocholine + H2O = (9Z-octadecenoyl)-sn-glycero-3-phosphocholine + (9Z)-octadecenoate + H(+). The enzyme catalyses a 1,2-diacyl-sn-glycero-3-phosphoethanolamine + H2O = a 2-acyl-sn-glycero-3-phosphoethanolamine + a fatty acid + H(+). The catalysed reaction is a 1,2-diacyl-sn-glycero-3-phospho-(1'-sn-glycerol) + H2O = 2-acyl-sn-glycero-3-phospho-(1'-sn-glycerol) + a fatty acid + H(+). It catalyses the reaction 1-hexadecanoyl-2-(9Z-octadecenoyl)-sn-glycero-3-phospho-(1'-sn-glycerol) + H2O = 2-(9Z-octadecenoyl)-sn-glycero-3-phospho-(1'-sn-glycerol) + hexadecanoate + H(+). It carries out the reaction 1-acyl-2-(5Z,8Z,11Z,14Z-eicosatetraenoyl)-sn-glycero-3-phosphocholine + H2O = 2-(5Z,8Z,11Z,14Z)-eicosatetraenoyl-sn-glycero-3-phosphocholine + a fatty acid + H(+). The enzyme catalyses 1-acyl-2-(5Z,8Z,11Z,14Z)-eicosatetraenoyl-sn-glycero-3-phosphoethanolamine + H2O = 2-(5Z,8Z,11Z,14Z)-eicosatetraenoyl-sn-glycero-3-phosphoethanolamine + a fatty acid + H(+). It participates in phospholipid metabolism; phosphatidylinositol metabolism. Phospholipase A1 (PLA1) that hydrolyzes ester bonds at the sn-1 position of glycerophospholipids producing a free fatty acid and a lysophospholipid. Prefers phosphatidate (1,2-diacyl-sn-glycero-3-phosphate, PA) as substrate in vitro, but can efficiently hydrolyze phosphatidylinositol (1,2-diacyl-sn-glycero-3-phospho-(1D-myo-inositol), PI), as well as a range of other glycerophospholipid substrates such as phosphatidylcholine (1,2-diacyl-sn-glycero-3-phosphocholine, PC), phosphatidylethanolamine (1,2-diacyl-sn-glycero-3-phosphoethanolamine, PE), phosphatidylserine (1,2-diacyl-sn-glycero-3-phospho-L-serine, PS) and phosphatidylglycerol (1,2-diacyl-sn-glycero-3-phospho-(1'-sn-glycerol), PG). Involved in the regulation of the endogenous content of polyunsaturated PI and PS lipids in the nervous system. Changes in these lipids extend to downstream metabolic products like PI phosphates PIP and PIP2, which play fundamental roles in cell biology. Regulates mitochondrial morphology. These dynamic changes may be due to PA hydrolysis at the mitochondrial surface. May play a regulatory role in spermatogenesis or sperm function. The chain is Phospholipase DDHD1 from Mus musculus (Mouse).